The sequence spans 755 residues: DNA ligase 1 (755 aa).

A mitochondrion-targeting transit peptide spans M1 to F44. Residue R2 is modified to N-acetylserine. Residues S47–K60 are compositionally biased toward polar residues. Disordered regions lie at residues S47–E79 and P97–V127. 2 positions are modified to phosphoserine: S58 and S75. Residues S102–S114 show a composition bias toward low complexity. S119 and S123 each carry phosphoserine. The interaction with target DNA stretch occupies residues K309–T318. Residue E417 coordinates ATP. The active-site N6-AMP-lysine intermediate is the K419. R424 and R440 together coordinate ATP. Residue E472 coordinates Mg(2+). The interaction with target DNA stretch occupies residues K493 to K495. E571 provides a ligand contact to Mg(2+). ATP-binding residues include K576, R590, and K596.

The protein belongs to the ATP-dependent DNA ligase family. It depends on Mg(2+) as a cofactor.

The protein resides in the mitochondrion. The protein localises to the nucleus. The enzyme catalyses ATP + (deoxyribonucleotide)n-3'-hydroxyl + 5'-phospho-(deoxyribonucleotide)m = (deoxyribonucleotide)n+m + AMP + diphosphate.. DNA ligase that seals nicks in double-stranded DNA during DNA replication, DNA recombination and DNA repair. The mitochondrial form is required for mitochondrial DNA maintenance but is non-essential while the nuclear form is essential for cell viability. This chain is DNA ligase 1 (CDC9), found in Saccharomyces cerevisiae (strain ATCC 204508 / S288c) (Baker's yeast).